We begin with the raw amino-acid sequence, 639 residues long: Protein sly1 (639 aa).

It belongs to the STXBP/unc-18/SEC1 family.

The protein localises to the cytoplasm. The chain is Protein sly1 (sly1) from Schizosaccharomyces pombe (strain 972 / ATCC 24843) (Fission yeast).